The sequence spans 1668 residues: Probable histone acetyltransferase HAC-like 1 (1668 aa).

Disordered regions lie at residues Met-1–Leu-34, Gln-459–Gly-493, and Lys-528–Gln-551. A compositionally biased stretch (polar residues) spans Gly-11–Val-23. Over residues Gln-459–Ser-469 the composition is skewed to low complexity. 2 stretches are compositionally biased toward polar residues: residues Ile-470–Glu-491 and Leu-536–Gln-551. The TAZ-type 1 zinc finger occupies Ala-651–Ala-732. The span at Lys-886–Ala-899 shows a compositional bias: basic and acidic residues. The tract at residues Lys-886–Lys-912 is disordered. Residues Asn-900–Lys-909 are compositionally biased toward polar residues. Residues His-1002–Glu-1079 form a PHD-type zinc finger. Residues Val-1094–Ala-1530 form the CBP/p300-type HAT domain. Acetyl-CoA contacts are provided by residues Leu-1217–Ser-1219, Arg-1236–Thr-1237, and Trp-1292. The stretch at Gly-1342–Lys-1365 forms a coiled coil. The segment at His-1412–Leu-1475 adopts a ZZ-type zinc-finger fold. 8 residues coordinate Zn(2+): Cys-1417, Cys-1420, Cys-1432, Cys-1435, Cys-1441, Cys-1444, His-1457, and His-1465. The segment at Glu-1553–Leu-1634 adopts a TAZ-type 2 zinc-finger fold. Residues Arg-1630–Arg-1650 are a coiled coil.

The protein localises to the nucleus. The enzyme catalyses L-lysyl-[protein] + acetyl-CoA = N(6)-acetyl-L-lysyl-[protein] + CoA + H(+). In terms of biological role, acetyltransferase enzyme. Acetylates histones, giving a specific tag for transcriptional activation. This is Probable histone acetyltransferase HAC-like 1 from Oryza sativa subsp. japonica (Rice).